The following is a 526-amino-acid chain: Light-independent protochlorophyllide reductase subunit B (526 aa).

Asp-36 is a [4Fe-4S] cluster binding site. Residue Asp-290 is the Proton donor of the active site. 425 to 426 (GL) serves as a coordination point for substrate.

The protein belongs to the ChlB/BchB/BchZ family. In terms of assembly, protochlorophyllide reductase is composed of three subunits; ChlL, ChlN and ChlB. Forms a heterotetramer of two ChlB and two ChlN subunits. Requires [4Fe-4S] cluster as cofactor.

The catalysed reaction is chlorophyllide a + oxidized 2[4Fe-4S]-[ferredoxin] + 2 ADP + 2 phosphate = protochlorophyllide a + reduced 2[4Fe-4S]-[ferredoxin] + 2 ATP + 2 H2O. The protein operates within porphyrin-containing compound metabolism; chlorophyll biosynthesis (light-independent). Its function is as follows. Component of the dark-operative protochlorophyllide reductase (DPOR) that uses Mg-ATP and reduced ferredoxin to reduce ring D of protochlorophyllide (Pchlide) to form chlorophyllide a (Chlide). This reaction is light-independent. The NB-protein (ChlN-ChlB) is the catalytic component of the complex. This is Light-independent protochlorophyllide reductase subunit B from Prochlorococcus marinus (strain MIT 9515).